Here is a 227-residue protein sequence, read N- to C-terminus: Probable minor pilin MMP0600 (227 aa).

The propeptide occupies 1–7 (MAKFSKG). The short motif at 8–16 (QISIELILL) is the QXSXEXXXL element.

Post-translationally, the N-terminus is probably cleaved by the prepilin peptidase EppA, which recognizes the class III signal sequence.

It localises to the secreted. Its subcellular location is the cell surface. The protein resides in the fimbrium. The protein is Probable minor pilin MMP0600 of Methanococcus maripaludis (strain DSM 14266 / JCM 13030 / NBRC 101832 / S2 / LL).